Here is a 636-residue protein sequence, read N- to C-terminus: Topoisomerase I damage affected protein 7 (636 aa).

Polar residues predominate over residues 1 to 18 (MNSNSTIGRTTLGESDTI). Disordered stretches follow at residues 1 to 33 (MNSN…NSRS), 87 to 109 (TLVS…QYDP), 238 to 271 (ISSP…SSTN), 299 to 326 (PTSS…DDTT), and 339 to 362 (QSTT…STSP). Asn4 carries an N-linked (GlcNAc...) asparagine glycan. 2 stretches are compositionally biased toward low complexity: residues 19 to 33 (SLSF…NSRS) and 87 to 108 (TLVS…SQYD). A glycan (N-linked (GlcNAc...) asparagine) is linked at Asn257. Residues 457-477 (IVGSVVGSVGGILICVLVVWF) form a helical membrane-spanning segment. N-linked (GlcNAc...) asparagine glycosylation is present at Asn492. The segment covering 510–541 (QAKEASLQAQDSGSQQRNTETASANNPFSNEF) has biased composition (polar residues). The interval 510 to 551 (QAKEASLQAQDSGSQQRNTETASANNPFSNEFNFKARGNPPP) is disordered. Residue Lys512 forms a Glycyl lysine isopeptide (Lys-Gly) (interchain with G-Cter in ubiquitin) linkage. N-linked (GlcNAc...) asparagine glycans are attached at residues Asn557, Asn562, and Asn626. Ser628 carries the phosphoserine modification.

This sequence belongs to the TDA7 family.

It is found in the vacuole membrane. This Saccharomyces cerevisiae (strain YJM789) (Baker's yeast) protein is Topoisomerase I damage affected protein 7 (TDA7).